Here is a 392-residue protein sequence, read N- to C-terminus: Protein O-glucosyltransferase 1 (392 aa).

A signal peptide spans 1–23 (MERRAGSRLRAWMLLLLLCPVQG). Intrachain disulfides connect C49–C56, C54–C357, C102–C108, and C263–C286. N53 carries N-linked (GlcNAc...) asparagine glycosylation. Residues 103–107 (MFPSR) form an interaction with the consensus sequence C-X-S-X-[PA]-C in peptide substrates region. Residue D133 is the Proton donor/acceptor of the active site. The segment at 172–178 (AVWPLYP) is interaction with the consensus sequence C-X-S-X-[PA]-C in peptide substrates. Y177 lines the UDP-alpha-D-glucose pocket. The N-linked (GlcNAc...) asparagine glycan is linked to N204. UDP-alpha-D-glucose is bound by residues S212, R218, and 274–279 (VAASFR). The N-linked (GlcNAc...) asparagine glycan is linked to N373. Residues 389–392 (KTEL) carry the Prevents secretion from ER motif.

It belongs to the glycosyltransferase 90 family. Widely expressed in newborn and adult tissues (at protein level).

Its subcellular location is the endoplasmic reticulum lumen. The catalysed reaction is L-seryl-[EGF-like domain protein] + UDP-alpha-D-xylose = 3-O-(beta-D-xylosyl)-L-seryl-[EGF-like domain protein] + UDP + H(+). It catalyses the reaction L-seryl-[EGF-like domain protein] + UDP-alpha-D-glucose = 3-O-(beta-D-glucosyl)-L-seryl-[EGF-like domain protein] + UDP + H(+). The protein operates within protein modification; protein glycosylation. Its function is as follows. Dual specificity glycosyltransferase that catalyzes the transfer of glucose and xylose from UDP-glucose and UDP-xylose, respectively, to a serine residue found in the consensus sequence of C-X-S-X-P-C. Specifically targets extracellular EGF repeats of protein such as CRB2, F7, F9 and NOTCH2. Acts as a positive regulator of Notch signaling by mediating O-glucosylation of Notch, leading to regulate muscle development. Notch glucosylation does not affect Notch ligand binding. Required during early development to promote gastrulation: acts by mediating O-glucosylation of CRB2, which is required for CRB2 localization to the cell membrane. This chain is Protein O-glucosyltransferase 1, found in Mus musculus (Mouse).